Consider the following 251-residue polypeptide: MNLNSIPAFDDNYIWVLNDEAGRCLIVDPGDAEPVLNAIAANNWQPEAIFLTHHHHDHVGGVKELVKKFPQIVVYGPQETQDKGTTQVVKDGETAFVLGHEFSVIATPGHTLGHICYFSKPYLFCGDTLFSGGCGRLFEGTPSQMYQSLKKLSALPDDTLVCCAHEYTLSNMKFALSILPHDLSINDYYRKVKELRAKNQITLPVILKNERQINVFLRTEDIDLINVINEETLLQQPEERFAWLRSKKDRF.

The Zn(2+) site is built by His53, His55, Asp57, His58, His110, Asp127, and His165.

This sequence belongs to the metallo-beta-lactamase superfamily. Glyoxalase II family. Monomer. Zn(2+) is required as a cofactor.

It catalyses the reaction an S-(2-hydroxyacyl)glutathione + H2O = a 2-hydroxy carboxylate + glutathione + H(+). Its pathway is secondary metabolite metabolism; methylglyoxal degradation; (R)-lactate from methylglyoxal: step 2/2. In terms of biological role, thiolesterase that catalyzes the hydrolysis of S-D-lactoyl-glutathione to form glutathione and D-lactic acid. This chain is Hydroxyacylglutathione hydrolase, found in Escherichia fergusonii (strain ATCC 35469 / DSM 13698 / CCUG 18766 / IAM 14443 / JCM 21226 / LMG 7866 / NBRC 102419 / NCTC 12128 / CDC 0568-73).